Reading from the N-terminus, the 196-residue chain is MEIDILHFEKKYPNFILAGIDEAGRGPLAGPVVAAAVIVDQNNIIAGIKDSKKLSKKKRELLYEQITANYIWATGIISHTEIDKINILEATKKACILAAENLSTKPEIVLVDGNMQFSDKRFISIINGDNLSLSIAAASIIAKVTRDRLMLELSNEFPQYLWHKNSGYGTKEHAQAIKEYGLSPYHRLSFTKALYK.

An RNase H type-2 domain is found at 15–196 (FILAGIDEAG…RLSFTKALYK (182 aa)). The a divalent metal cation site is built by aspartate 21, glutamate 22, and aspartate 112.

This sequence belongs to the RNase HII family. The cofactor is Mn(2+). It depends on Mg(2+) as a cofactor.

The protein resides in the cytoplasm. It catalyses the reaction Endonucleolytic cleavage to 5'-phosphomonoester.. Functionally, endonuclease that specifically degrades the RNA of RNA-DNA hybrids. In Rickettsia bellii (strain OSU 85-389), this protein is Ribonuclease HII.